The chain runs to 156 residues: Large ribosomal subunit protein bL9 (156 aa).

Belongs to the bacterial ribosomal protein bL9 family.

Functionally, binds to the 23S rRNA. This Treponema pallidum (strain Nichols) protein is Large ribosomal subunit protein bL9.